A 110-amino-acid polypeptide reads, in one-letter code: UPF0251 protein PYRAB12660 (110 aa).

Belongs to the UPF0251 family.

This chain is UPF0251 protein PYRAB12660, found in Pyrococcus abyssi (strain GE5 / Orsay).